The chain runs to 402 residues: Shaggy-related protein kinase GSK2 (402 aa).

The disordered stretch occupies residues 1–38; that stretch reads MDQPAPAPEPMLLDAQPPAAVACDKKQQEGEAPYAEGN. Positions 63-347 constitute a Protein kinase domain; the sequence is YMAERVVGTG…ALDACAHPFF (285 aa). ATP-binding positions include 69-77 and Lys-92; that span reads VGTGSFGIV. Catalysis depends on Asp-188, which acts as the Proton acceptor.

It belongs to the protein kinase superfamily. CMGC Ser/Thr protein kinase family. GSK-3 subfamily. Interacts with DLT. Interacts with OFP8. Interacts with GRF4. Interacts with PUB24. Interacts with SMOS1. Post-translationally, autophosphorylated. As to expression, expressed in lamina joints, vascular tissue and nodes.

It localises to the cytoplasm. Its subcellular location is the nucleus. The catalysed reaction is L-seryl-[protein] + ATP = O-phospho-L-seryl-[protein] + ADP + H(+). It catalyses the reaction L-threonyl-[protein] + ATP = O-phospho-L-threonyl-[protein] + ADP + H(+). In terms of biological role, serine-threonine kinase that acts as a negative regulator of brassinosteroid (BR) signaling. Phosphorylates DLT and BZR1, two positive regulators that mediates several BR responses. Phosphorylation of DLT and BZR1 inhibits their activities in BR signaling. Phosphorylates OFP8, a positive regulator of BR responses. Phosphorylated OFP8 shuttles from the nucleus to the cytoplasm where it is degraded by the proteasome. Phosphorylates the E3 ubiquitin-protein ligase PUB24, a negative regulator of BR signaling, which targets BZR1 and promotes its degradation via the 26S proteasome. Phosphorylation of PUB24 increases its stability. Phosphorylates the AP2-ERF transcription factor SMOS1, a positive regulator of BR signaling, which cooperatively functions in a transactivating complex with BZR1 to enhance the transcription of BR biosynthetic genes. Phosphorylation of SMOS1 leads to its degradation by an unknown mechanism. The protein is Shaggy-related protein kinase GSK2 of Oryza sativa subsp. japonica (Rice).